The primary structure comprises 500 residues: Metal transporter Nramp3.1 (500 aa).

The next 12 membrane-spanning stretches (helical) occupy residues 51–71, 79–99, 128–148, 160–180, 188–208, 234–254, 280–300, 322–342, 370–390, 401–421, 439–459, and 467–487; these read LWLF…PGNL, AIAG…GLLV, MILW…EVIG, VLPL…FLFL, LEAA…WMFA, AVGV…SALV, AALA…AKGF, YGGG…AAGQ, ALIT…VFDT, WLNM…LCLV, VSWL…LDFF, and VFTT…IYLI.

The protein belongs to the NRAMP (TC 2.A.55) family. Expressed in roots, stems, buds and leaves.

The protein localises to the golgi apparatus. It is found in the trans-Golgi network membrane. It catalyses the reaction Mn(2+)(in) = Mn(2+)(out). The enzyme catalyses Fe(2+)(in) = Fe(2+)(out). In terms of biological role, divalent metal transporter. Can transport manganese (Mn) and iron (Fe). Involved in the control of cell-to-cell transport of manganese (Mn) between organs and tissues to monitor Mn homeostasis. In Populus trichocarpa (Western balsam poplar), this protein is Metal transporter Nramp3.1.